A 66-amino-acid polypeptide reads, in one-letter code: Beta-defensin 107A (66 aa).

The signal sequence occupies residues 1-22 (MKIFFFIFAALILLAQIFQART). 2 disulfide bridges follow: Cys-37/Cys-51 and Cys-41/Cys-60.

This sequence belongs to the beta-defensin family.

The protein resides in the secreted. In terms of biological role, has antibacterial activity. This is Beta-defensin 107A (DEFB107A) from Macaca fascicularis (Crab-eating macaque).